A 475-amino-acid polypeptide reads, in one-letter code: Sulfate adenylyltransferase subunit 1 (475 aa).

The 215-residue stretch at 25–239 (KSLLRFLTCG…EVLETVEIQR (215 aa)) folds into the tr-type G domain. The tract at residues 34–41 (GSVDDGKS) is G1. Position 34-41 (34-41 (GSVDDGKS)) interacts with GTP. The tract at residues 92 to 96 (GITID) is G2. A G3 region spans residues 113 to 116 (DTPG). GTP contacts are provided by residues 113-117 (DTPGH) and 168-171 (NKMD). The G4 stretch occupies residues 168 to 171 (NKMD). A G5 region spans residues 206-208 (SAL).

Belongs to the TRAFAC class translation factor GTPase superfamily. Classic translation factor GTPase family. CysN/NodQ subfamily. In terms of assembly, heterodimer composed of CysD, the smaller subunit, and CysN.

The enzyme catalyses sulfate + ATP + H(+) = adenosine 5'-phosphosulfate + diphosphate. The protein operates within sulfur metabolism; hydrogen sulfide biosynthesis; sulfite from sulfate: step 1/3. Its function is as follows. With CysD forms the ATP sulfurylase (ATPS) that catalyzes the adenylation of sulfate producing adenosine 5'-phosphosulfate (APS) and diphosphate, the first enzymatic step in sulfur assimilation pathway. APS synthesis involves the formation of a high-energy phosphoric-sulfuric acid anhydride bond driven by GTP hydrolysis by CysN coupled to ATP hydrolysis by CysD. In Shigella flexneri serotype 5b (strain 8401), this protein is Sulfate adenylyltransferase subunit 1.